The sequence spans 354 residues: Protein RecA (354 aa).

68-75 (GPESSGKT) contacts ATP.

This sequence belongs to the RecA family.

It localises to the cytoplasm. Its function is as follows. Can catalyze the hydrolysis of ATP in the presence of single-stranded DNA, the ATP-dependent uptake of single-stranded DNA by duplex DNA, and the ATP-dependent hybridization of homologous single-stranded DNAs. It interacts with LexA causing its activation and leading to its autocatalytic cleavage. The protein is Protein RecA of Synechocystis sp. (strain ATCC 27184 / PCC 6803 / Kazusa).